A 419-amino-acid chain; its full sequence is Transcription termination factor Rho (419 aa).

Residues 48–123 (EISGDGVLEI…LKVDSINFDR (76 aa)) form the Rho RNA-BD domain. RNA-binding regions lie at residues 61-66 (GFGFLR), 78-80 (DIY), and 108-110 (ERY). Residues 169 to 174 (GKGQRG), 181 to 186 (KAGKTI), and arginine 212 contribute to the ATP site. The RNA-binding 2 stretch occupies residues 284–288 (VLTGG).

The protein belongs to the Rho family. Homohexamer. The homohexamer assembles into an open ring structure.

In terms of biological role, facilitates transcription termination by a mechanism that involves Rho binding to the nascent RNA, activation of Rho's RNA-dependent ATPase activity, and release of the mRNA from the DNA template. The protein is Transcription termination factor Rho of Pseudomonas aeruginosa (strain ATCC 15692 / DSM 22644 / CIP 104116 / JCM 14847 / LMG 12228 / 1C / PRS 101 / PAO1).